Consider the following 1115-residue polypeptide: Eukaryotic translation initiation factor 2-alpha kinase 3 (1115 aa).

An N-terminal signal peptide occupies residues 1–29 (MERATGPGSLARTLLLPLLLGLVAGTVTA). The Extracellular segment spans residues 30 to 514 (RRTSDLLAPT…PNYKNIRKKD (485 aa)). The tract at residues 74–101 (SEALPAAAGEQEAREPEPEPEEEPDIRP) is disordered. N-linked (GlcNAc...) asparagine glycosylation is present at Asn-259. A helical transmembrane segment spans residues 515-535 (PVLLLHWWKEIVGTIVFCIVA). At 536-1115 (TTFIVRRLFH…SSPHSPLPSN (580 aa)) the chain is on the cytoplasmic side. The 484-residue stretch at 593–1076 (FEPIQCMGRG…AASIIENAIF (484 aa)) folds into the Protein kinase domain. Position 599–607 (599–607 (MGRGGFGVV)) interacts with ATP. Position 619 is a phosphotyrosine; by autocatalysis (Tyr-619). Lys-622 is a binding site for ATP. The interval 647-887 (EHPGIVRYFN…SPKVYLYIQM (241 aa)) is insert loop. Ser-715 is modified (phosphoserine). Phosphothreonine is present on Thr-802. 2 disordered regions span residues 807–832 (VFED…VGNH) and 841–860 (RHSG…SRPT). Positions 845-860 (SKSSEPTVSVSPSRPT) are enriched in polar residues. Residue Asp-936 is the Proton acceptor of the active site. Phosphothreonine is present on Thr-981. The disordered stretch occupies residues 1087–1115 (LRQRSRSMSSPGAKHSRHSSSPHSPLPSN). Ser-1093 bears the Phosphoserine mark.

This sequence belongs to the protein kinase superfamily. Ser/Thr protein kinase family. GCN2 subfamily. In terms of assembly, forms dimers with HSPA5/BIP in resting cells. Homotetramerizes in response to endoplasmic reticulum (ER) stress, leading to its activation. Interacts with HSP90B1/GRP94. Interacts with DNAJC3; inhibiting EIF2AK3/PERK activity. Interacts with ATAD3A; ATAD3A and EIF2S1/eIF-2-alpha occupy a common binding site within the cytoplasmic loop of EIF2AK3/PERK, leading to prevent EIF2AK3/PERK association with its substrate EIF2S1/eIF-2-alpha. Interacts with MFN2. Interacts with TMEM33. Interacts with PDIA6. Interacts with LACC1. Post-translationally, oligomerization of the N-terminal ER luminal domain by ER stress promotes EIF2AK3/PERK trans-autophosphorylation of the C-terminal cytoplasmic kinase domain at multiple residues including Thr-981 on the kinase activation loop. Autophosphorylated at Tyr-619 following endoplasmic reticulum stress, leading to activate its activity. Dephosphorylated at Tyr-619 by PTPN1/PTP1B, leading to inactivate its enzyme activity. Phosphorylation at Thr-802 by AKT (AKT1, AKT2 and/or AKT3) inactivates EIF2AK3/PERK. ADP-ribosylated by PARP16 upon ER stress, which increases kinase activity.

It localises to the endoplasmic reticulum membrane. The enzyme catalyses L-seryl-[protein] + ATP = O-phospho-L-seryl-[protein] + ADP + H(+). The catalysed reaction is L-threonyl-[protein] + ATP = O-phospho-L-threonyl-[protein] + ADP + H(+). It carries out the reaction L-tyrosyl-[protein] + ATP = O-phospho-L-tyrosyl-[protein] + ADP + H(+). With respect to regulation, inhibited by HSPA5/BIP in absence of stress. Perturbation in protein folding in the endoplasmic reticulum (ER) promotes reversible dissociation from HSPA5/BIP and oligomerization, resulting in trans-autophosphorylation and kinase activity induction. Inactivated following phosphorylation at Thr-802 by AKT (AKT1, AKT2 and/or AKT3). Inhibited by ATAD3A at mitochondria-endoplasmic reticulum contact sites, providing a safe haven for mitochondrial protein translation during ER stress. Its function is as follows. Metabolic-stress sensing protein kinase that phosphorylates the alpha subunit of eukaryotic translation initiation factor 2 (EIF2S1/eIF-2-alpha) in response to various stress, such as unfolded protein response (UPR). Key effector of the integrated stress response (ISR) to unfolded proteins: EIF2AK3/PERK specifically recognizes and binds misfolded proteins, leading to its activation and EIF2S1/eIF-2-alpha phosphorylation. EIF2S1/eIF-2-alpha phosphorylation in response to stress converts EIF2S1/eIF-2-alpha in a global protein synthesis inhibitor, leading to a global attenuation of cap-dependent translation, while concomitantly initiating the preferential translation of ISR-specific mRNAs, such as the transcriptional activators ATF4 and QRICH1, and hence allowing ATF4- and QRICH1-mediated reprogramming. The EIF2AK3/PERK-mediated unfolded protein response increases mitochondrial oxidative phosphorylation by promoting ATF4-mediated expression of COX7A2L/SCAF1, thereby increasing formation of respiratory chain supercomplexes. In contrast to most subcellular compartments, mitochondria are protected from the EIF2AK3/PERK-mediated unfolded protein response due to EIF2AK3/PERK inhibition by ATAD3A at mitochondria-endoplasmic reticulum contact sites. In addition to EIF2S1/eIF-2-alpha, also phosphorylates NFE2L2/NRF2 in response to stress, promoting release of NFE2L2/NRF2 from the BCR(KEAP1) complex, leading to nuclear accumulation and activation of NFE2L2/NRF2. Serves as a critical effector of unfolded protein response (UPR)-induced G1 growth arrest due to the loss of cyclin-D1 (CCND1). Involved in control of mitochondrial morphology and function. This chain is Eukaryotic translation initiation factor 2-alpha kinase 3, found in Bos taurus (Bovine).